The chain runs to 199 residues: Putative inactive ribonuclease 11 (199 aa).

The N-terminal stretch at 1-16 is a signal peptide; that stretch reads METFPLLLLSLGLVLA. Residue N61 is glycosylated (N-linked (GlcNAc...) asparagine). The active-site Proton acceptor is the H82. 2 N-linked (GlcNAc...) asparagine glycosylation sites follow: N89 and N111. Intrachain disulfides connect C98-C158 and C114-C169. 115–119 provides a ligand contact to substrate; sequence KWSNN.

It belongs to the pancreatic ribonuclease family.

It localises to the secreted. The polypeptide is Putative inactive ribonuclease 11 (RNASE11) (Homo sapiens (Human)).